We begin with the raw amino-acid sequence, 158 residues long: Cysteine proteinase inhibitor 4 (158 aa).

A signal peptide spans 1 to 24 (MAARCPVGVASVLLLIVLVTVASA). The disordered stretch occupies residues 26 to 51 (SGARSGGGGGGGIRELRGGGAGRRVG). A compositionally biased stretch (gly residues) spans 29 to 49 (RSGGGGGGGIRELRGGGAGRR). The region spanning 51–116 (GGRTEVRDVE…KYYLRVAAAE (66 aa)) is the Cystatin domain. Residues 101 to 105 (QVVSG) carry the Secondary area of contact motif.

This sequence belongs to the cystatin family. Phytocystatin subfamily.

It is found in the secreted. Its function is as follows. Specific inhibitor of cysteine proteinases. Probably involved in the regulation of endogenous processes and in defense against pests and pathogens. This chain is Cysteine proteinase inhibitor 4, found in Oryza sativa subsp. japonica (Rice).